The sequence spans 506 residues: Galactose/methyl galactoside import ATP-binding protein MglA (506 aa).

ABC transporter domains follow at residues 14 to 249 (LTMT…VGRE) and 260 to 506 (VPKE…AKYL). Position 46–53 (46–53 (GENGAGKS)) interacts with ATP.

The protein belongs to the ABC transporter superfamily. Galactose/methyl galactoside importer (TC 3.A.1.2.3) family. The complex is composed of one ATP-binding protein (MglA), two transmembrane proteins (MglC) and a solute-binding protein (MglB).

The protein localises to the cell inner membrane. It catalyses the reaction D-galactose(out) + ATP + H2O = D-galactose(in) + ADP + phosphate + H(+). It carries out the reaction methyl beta-D-galactoside(out) + ATP + H2O = methyl beta-D-galactoside(in) + ADP + phosphate + H(+). Its function is as follows. Part of the ABC transporter complex MglABC involved in galactose/methyl galactoside import. Responsible for energy coupling to the transport system. This Haemophilus influenzae (strain 86-028NP) protein is Galactose/methyl galactoside import ATP-binding protein MglA.